The following is a 121-amino-acid chain: Large ribosomal subunit protein uL18 (121 aa).

The protein belongs to the universal ribosomal protein uL18 family. Part of the 50S ribosomal subunit; part of the 5S rRNA/L5/L18/L25 subcomplex. Contacts the 5S and 23S rRNAs.

Its function is as follows. This is one of the proteins that bind and probably mediate the attachment of the 5S RNA into the large ribosomal subunit, where it forms part of the central protuberance. This Verminephrobacter eiseniae (strain EF01-2) protein is Large ribosomal subunit protein uL18.